The primary structure comprises 491 residues: Glucose-6-phosphate 1-dehydrogenase (491 aa).

The NADP(+) site is built by Arg-51 and Lys-150. Residues His-180, Lys-184, Glu-218, and Asp-237 each contribute to the substrate site. The active-site Proton acceptor is the His-242. Lys-341 provides a ligand contact to substrate.

It belongs to the glucose-6-phosphate dehydrogenase family.

It catalyses the reaction D-glucose 6-phosphate + NADP(+) = 6-phospho-D-glucono-1,5-lactone + NADPH + H(+). Its pathway is carbohydrate degradation; pentose phosphate pathway; D-ribulose 5-phosphate from D-glucose 6-phosphate (oxidative stage): step 1/3. Catalyzes the oxidation of glucose 6-phosphate to 6-phosphogluconolactone. The sequence is that of Glucose-6-phosphate 1-dehydrogenase from Rhizobium meliloti (strain 1021) (Ensifer meliloti).